The sequence spans 308 residues: Maspardin (308 aa).

The 73-residue stretch at 87–159 (FCDGFRKLLD…NSFWLMPAFM (73 aa)) folds into the AB hydrolase-1 domain. Ser-304 carries the phosphoserine modification.

This sequence belongs to the AB hydrolase superfamily. As to quaternary structure, interacts with CD4. Interacts with ALDH16A1. Expressed in all tissues tested, including heart, brain, placenta, lung, liver, skeletal muscle, kidney and pancreas. Expressed in J.CaM1.6, HuT 78 and HeLa cell lines (at protein level).

The protein resides in the cytoplasm. It is found in the cytosol. Its subcellular location is the membrane. It localises to the endosome membrane. The protein localises to the golgi apparatus. The protein resides in the trans-Golgi network membrane. Functionally, may play a role as a negative regulatory factor in CD4-dependent T-cell activation. The polypeptide is Maspardin (SPG21) (Homo sapiens (Human)).